Consider the following 132-residue polypeptide: Small ribosomal subunit protein uS8 (132 aa).

The protein belongs to the universal ribosomal protein uS8 family. As to quaternary structure, part of the 30S ribosomal subunit. Contacts proteins S5 and S12.

Its function is as follows. One of the primary rRNA binding proteins, it binds directly to 16S rRNA central domain where it helps coordinate assembly of the platform of the 30S subunit. The chain is Small ribosomal subunit protein uS8 from Borrelia hermsii (strain HS1 / DAH).